A 636-amino-acid polypeptide reads, in one-letter code: uncharacterized protein (636 aa).

3 consecutive transmembrane segments (helical) span residues 12–32 (AVIYAALILILLFVYGIFGSI), 34–54 (IMHLGVIDAIYYTITTVTTTG), and 75–95 (IGAGFLLYIFTLMLSVMFMSF). Residues 112–231 (KNHFILCGFG…KKAGANRIIS (120 aa)) form the RCK N-terminal domain.

Its subcellular location is the cell membrane. This is an uncharacterized protein from Methanothermus fervidus (strain ATCC 43054 / DSM 2088 / JCM 10308 / V24 S).